We begin with the raw amino-acid sequence, 300 residues long: Cation-efflux pump FieF (300 aa).

Transmembrane regions (helical) follow at residues 12–32, 39–59, 82–102, and 114–134; these read AALA…FAWW, ILAA…NLLV, AALA…LTGI, and PLVG…LVTF. Asp-45 and Asp-49 together coordinate Zn(2+). The Zn(2+) site is built by His-153 and Asp-157. Helical transmembrane passes span 156 to 176 and 182 to 202; these read SDVM…YGLH and FALG…YEAI.

This sequence belongs to the cation diffusion facilitator (CDF) transporter (TC 2.A.4) family. FieF subfamily. In terms of assembly, homodimer.

Its subcellular location is the cell inner membrane. It carries out the reaction Zn(2+)(in) + H(+)(out) = Zn(2+)(out) + H(+)(in). It catalyses the reaction Cd(2+)(in) + H(+)(out) = Cd(2+)(out) + H(+)(in). The catalysed reaction is Fe(2+)(in) + H(+)(out) = Fe(2+)(out) + H(+)(in). In terms of biological role, divalent metal cation transporter which exports Zn(2+), Cd(2+) and possibly Fe(2+). May be involved in zinc and iron detoxification by efflux. The chain is Cation-efflux pump FieF from Cronobacter sakazakii (strain ATCC BAA-894) (Enterobacter sakazakii).